We begin with the raw amino-acid sequence, 414 residues long: UPF0754 membrane protein tlr2287 (414 aa).

Transmembrane regions (helical) follow at residues 2 to 22 (ADISYWTLLVPPLAGGVIGYF) and 386 to 406 (AIVRLGGILGFLIGVVQAGVL).

Belongs to the UPF0754 family.

The protein resides in the cell inner membrane. The sequence is that of UPF0754 membrane protein tlr2287 from Thermosynechococcus vestitus (strain NIES-2133 / IAM M-273 / BP-1).